A 417-amino-acid chain; its full sequence is Serine hydroxymethyltransferase (417 aa).

(6S)-5,6,7,8-tetrahydrofolate contacts are provided by residues L121 and 125 to 127 (GHL). K229 carries the N6-(pyridoxal phosphate)lysine modification. 355-357 (SPF) provides a ligand contact to (6S)-5,6,7,8-tetrahydrofolate.

It belongs to the SHMT family. As to quaternary structure, homodimer. It depends on pyridoxal 5'-phosphate as a cofactor.

Its subcellular location is the cytoplasm. The enzyme catalyses (6R)-5,10-methylene-5,6,7,8-tetrahydrofolate + glycine + H2O = (6S)-5,6,7,8-tetrahydrofolate + L-serine. It functions in the pathway one-carbon metabolism; tetrahydrofolate interconversion. Its pathway is amino-acid biosynthesis; glycine biosynthesis; glycine from L-serine: step 1/1. Its function is as follows. Catalyzes the reversible interconversion of serine and glycine with tetrahydrofolate (THF) serving as the one-carbon carrier. This reaction serves as the major source of one-carbon groups required for the biosynthesis of purines, thymidylate, methionine, and other important biomolecules. Also exhibits THF-independent aldolase activity toward beta-hydroxyamino acids, producing glycine and aldehydes, via a retro-aldol mechanism. This is Serine hydroxymethyltransferase from Shewanella denitrificans (strain OS217 / ATCC BAA-1090 / DSM 15013).